The chain runs to 182 residues: Small ribosomal subunit protein uS4c (182 aa).

Residues 13–34 (GLTSKRPRSGSDPKNQLRSGKR) are disordered. An S4 RNA-binding domain is found at 82–143 (MRLDNILFRL…KQRSKALIQN (62 aa)).

The protein belongs to the universal ribosomal protein uS4 family. In terms of assembly, part of the 30S ribosomal subunit. Contacts protein S5. The interaction surface between S4 and S5 is involved in control of translational fidelity.

It localises to the plastid. The protein resides in the chloroplast. In terms of biological role, one of the primary rRNA binding proteins, it binds directly to 16S rRNA where it nucleates assembly of the body of the 30S subunit. With S5 and S12 plays an important role in translational accuracy. The sequence is that of Small ribosomal subunit protein uS4c (rps4) from Iris lutescens (Crimean iris).